Reading from the N-terminus, the 213-residue chain is Nucleolar protein 12 (213 aa).

Residues 33-96 (GFHKRKVERK…RLVTAKTESV (64 aa)) adopt a coiled-coil conformation. Positions 118 to 213 (ARLLGLTPPE…LTGKARHSGE (96 aa)) are disordered. Composition is skewed to basic residues over residues 170 to 182 (AHSR…KHPR) and 198 to 213 (KAQR…HSGE).

Belongs to the RRP17 family. As to quaternary structure, interacts with KIAA1191.

It is found in the nucleus. The protein resides in the nucleolus. Its subcellular location is the cytoplasm. Multifunctional RNA binding protein that plays a role in RNA metabolism and DNA maintenance. Participates in the resolution of DNA stress and the maintenance of genome integrity by localizing to sites of DNA insults. Also plays a role in proper nucleolar organization by limiting nucleolar size and regulating nucleolar number. Mechanistically, regulates the nucleolar levels of fibrillarin and nucleolin, two key players in pre-rRNA processing and ribosome assembly. The polypeptide is Nucleolar protein 12 (NOL12) (Homo sapiens (Human)).